The primary structure comprises 198 residues: Recombination protein RecR (198 aa).

The C4-type zinc finger occupies 59 to 74 (CSLCCNYTDHDPCPIC). Residues 82–175 (TLLCIVEQPR…KVTRIAHGLP (94 aa)) form the Toprim domain.

This sequence belongs to the RecR family.

May play a role in DNA repair. It seems to be involved in an RecBC-independent recombinational process of DNA repair. It may act with RecF and RecO. The protein is Recombination protein RecR of Desulfitobacterium hafniense (strain DSM 10664 / DCB-2).